Here is a 492-residue protein sequence, read N- to C-terminus: Rab5 GDP/GTP exchange factor (492 aa).

The interval 1 to 74 (MSLKSERRGI…EEEAFASSQS (74 aa)) is interaction with ubiquitinated proteins. An A20-type zinc finger spans residues 13-47 (DQSELLCKKGCGYYGNPAWQGFCSKCWREEYHKAR). Residues C19, C23, C35, and C38 each contribute to the Zn(2+) site. Positions 66-85 (EEAFASSQSSQGAQSLTFSK) are disordered. Residues 69–84 (FASSQSSQGAQSLTFS) are compositionally biased toward low complexity. Phosphoserine occurs at positions 125 and 133. Residues K152 and K171 each carry the N6-acetyllysine modification. In terms of domain architecture, VPS9 spans 233 to 376 (EKKDLAIQKR…IEKLDAQSLN (144 aa)). Phosphoserine occurs at positions 374, 378, 391, and 401. Residues 408–449 (VKQMYKNLDLLSQLNERQERIMNEAKKLEKDLIDWTDGIAKE) adopt a coiled-coil conformation. The tract at residues 471–492 (IDSENVENDKLPPPLQPQVYAG) is disordered.

As to quaternary structure, heterodimer with RABEP1. The heterodimer binds RAB4A and RAB5A that have been activated by GTP-binding. Binds TSC2, GGA1, GGA2, GGA3, AP1G1 and AP1G2. Interacts with RAB21, and with 100-fold lower affinity also with RAB22. Interacts with ubiquitinated EGFR. Interacts with RGS14; the interaction is GTP-dependent. Monoubiquitinated. In terms of tissue distribution, detected in brain.

The protein resides in the cytoplasm. The protein localises to the early endosome. It is found in the recycling endosome. Rab effector protein acting as linker between gamma-adaptin and RAB5A. Involved in endocytic membrane fusion and membrane trafficking of recycling endosomes. Stimulates nucleotide exchange on RAB5A. Can act as a ubiquitin ligase. The sequence is that of Rab5 GDP/GTP exchange factor (RABGEF1) from Bos taurus (Bovine).